The primary structure comprises 438 residues: Protein DJ-1 homolog B (438 aa).

The transit peptide at 1 to 45 (MASSSLCHRYFNKITVTPFFNTKKLHHYSPRRISLRVNRRSFSIS) directs the protein to the chloroplast. PfpI endopeptidase domains lie at 53 to 220 (KKVL…EQLL) and 258 to 424 (PQIL…EKFY).

Belongs to the peptidase C56 family. In terms of assembly, homodimer.

Its subcellular location is the plastid. The protein resides in the chloroplast. Its function is as follows. May be involved in oxidative stress response. This chain is Protein DJ-1 homolog B (DJ1B), found in Arabidopsis thaliana (Mouse-ear cress).